We begin with the raw amino-acid sequence, 292 residues long: Transforming growth factor-beta receptor type 3-like protein (292 aa).

An N-terminal signal peptide occupies residues 1–16 (MLGTVLLLALLPGITT). Residues 17 to 170 (LPSGPPAPPF…APAPLTPPPP (154 aa)) form the ZP; truncated domain. At 17–244 (LPSGPPAPPF…PAPAALEPAP (228 aa)) the chain is on the extracellular side. A disulfide bridge connects residues cysteine 85 and cysteine 147. The segment at 160 to 236 (RAPAPLTPPP…AVRPEPPAPA (77 aa)) is disordered. Composition is skewed to pro residues over residues 164–175 (PLTPPPPPPPSR) and 213–222 (PRPPPRPPKS). Residues 245-265 (VVALVLAAFVLGAALAAGLGL) form a helical membrane-spanning segment. At 266–292 (VCAHSAPHAPGPPARASPSGPQPRRSQ) the chain is on the cytoplasmic side. The interval 273 to 292 (HAPGPPARASPSGPQPRRSQ) is disordered. Over residues 281–292 (ASPSGPQPRRSQ) the composition is skewed to low complexity.

In terms of processing, glycosylated. As to expression, expressed in pituitary gland gonadotrope cells.

The protein localises to the cell membrane. In terms of biological role, expressed in gonadotrope cells, acts as an inhibin B coreceptor and regulates follicle-stimulating hormone (FSH) levels and female fertility. This is Transforming growth factor-beta receptor type 3-like protein from Homo sapiens (Human).